The primary structure comprises 89 residues: Teretoxin Tan22.12 (89 aa).

A signal peptide spans 1-22; that stretch reads MKVLFTLAMIVVTLCLGQRMRR.

It belongs to the teretoxin C (TC) superfamily. In terms of processing, contains 4 disulfide bonds. As to expression, expressed by the venom duct.

The protein localises to the secreted. The protein is Teretoxin Tan22.12 of Terebra anilis (Auger snail).